A 642-amino-acid chain; its full sequence is Threonine--tRNA ligase (642 aa).

Residues 1–58 (MQVAGKELEVQQGALCGEVLKEALSKKQFKNVVVAKCGDTLLDLTTTVPADCTDLEPV) enclose the TGS domain. Residues 239–530 (DHRKLGTQLD…LLEHTGGALP (292 aa)) are catalytic. Zn(2+)-binding residues include Cys331, His382, and His507.

The protein belongs to the class-II aminoacyl-tRNA synthetase family. As to quaternary structure, homodimer. The cofactor is Zn(2+).

The protein localises to the cytoplasm. It carries out the reaction tRNA(Thr) + L-threonine + ATP = L-threonyl-tRNA(Thr) + AMP + diphosphate + H(+). Its function is as follows. Catalyzes the attachment of threonine to tRNA(Thr) in a two-step reaction: L-threonine is first activated by ATP to form Thr-AMP and then transferred to the acceptor end of tRNA(Thr). Also edits incorrectly charged L-seryl-tRNA(Thr). This is Threonine--tRNA ligase from Maridesulfovibrio salexigens (strain ATCC 14822 / DSM 2638 / NCIMB 8403 / VKM B-1763) (Desulfovibrio salexigens).